Reading from the N-terminus, the 308-residue chain is Growth/differentiation factor 15 (308 aa).

An N-terminal signal peptide occupies residues 1–29 (MPGQELRTVNGSQMLLVLLVLSWLPHGGA). A propeptide spanning residues 30–194 (LSLAEASRAS…RPQAARGRRR (165 aa)) is cleaved from the precursor. Asparagine 70 carries an N-linked (GlcNAc...) asparagine glycan. The interval 152-177 (APALHLRLSPPPSQSDQLLAESSSAR) is disordered. Residues 165–177 (QSDQLLAESSSAR) show a composition bias toward polar residues. Intrachain disulfides connect cysteine 203-cysteine 210, cysteine 211-cysteine 274, cysteine 240-cysteine 305, and cysteine 244-cysteine 307.

The protein belongs to the TGF-beta family. Homodimer; disulfide-linked. Interacts with GFRAL and RET; ligand of GFRAL, which mediates GDF15 internalization and cellular signaling through interaction with RET via the formation of a 2:2:2 ternary complex composed of GDF15, GFRAL and RET. Detected in plasma (at protein level). Highly expressed in placenta, with lower levels in prostate and colon and some expression in kidney.

The protein localises to the secreted. Its function is as follows. Hormone produced in response to various stresses to confer information about those stresses to the brain, and trigger an aversive response, characterized by nausea, vomiting, and/or loss of appetite. The aversive response is both required to reduce continuing exposure to those stresses at the time of exposure and to promote avoidance behavior in the future. Acts by binding to its receptor, GFRAL, activating GFRAL-expressing neurons localized in the area postrema and nucleus tractus solitarius of the brainstem. It then triggers the activation of neurons localized within the parabrachial nucleus and central amygdala, which constitutes part of the 'emergency circuit' that shapes responses to stressful conditions. The GDF15-GFRAL signal induces expression of genes involved in metabolism, such as lipid metabolism in adipose tissues. Required for avoidance behavior in response to food allergens: induced downstream of mast cell activation to promote aversion and minimize harmful effects of exposure to noxious substances. In addition to suppress appetite, also promotes weight loss by enhancing energy expenditure in muscle: acts by increasing calcium futile cycling in muscle. Contributes to the effect of metformin, an anti-diabetic drug, on appetite reduction and weight loss: produced in the kidney in response to metformin treatment, thereby activating the GDF15-GFRAL response, leading to reduced appetite and weight. The contribution of GDF15 to weight loss following metformin treatment is however limited and subject to discussion. Produced in response to anticancer drugs, such as camptothecin or cisplatin, promoting nausea, vomiting and contributing to malnutrition. Overproduced in many cancers, promoting anorexia in cancer (cachexia). Responsible for the risk of nausea and vomiting during pregnancy: high levels of GDF15 during pregnancy, mostly originating from the fetus, are associated with increased nausea and vomiting. Maternal sensitivity to nausea is probably determined by pre-pregnancy exposure to GDF15, women with naturally high level of GDF15 being less susceptible to nausea than women with low levels of GDF15 before pregnancy. Promotes metabolic adaptation in response to systemic inflammation caused by bacterial and viral infections in order to promote tissue tolerance and prevent tissue damage. Required for tissue tolerance in response to myocardial infarction by acting as an inhibitor of leukocyte integring activation, thereby protecting against cardiac rupture. Inhibits growth hormone signaling on hepatocytes. The chain is Growth/differentiation factor 15 from Homo sapiens (Human).